Consider the following 201-residue polypeptide: FMN-dependent NADH:quinone oxidoreductase (201 aa).

FMN-binding positions include S10, 16–18 (SQS), and 96–99 (MYNF).

It belongs to the azoreductase type 1 family. As to quaternary structure, homodimer. FMN serves as cofactor.

The enzyme catalyses 2 a quinone + NADH + H(+) = 2 a 1,4-benzosemiquinone + NAD(+). The catalysed reaction is N,N-dimethyl-1,4-phenylenediamine + anthranilate + 2 NAD(+) = 2-(4-dimethylaminophenyl)diazenylbenzoate + 2 NADH + 2 H(+). Quinone reductase that provides resistance to thiol-specific stress caused by electrophilic quinones. Its function is as follows. Also exhibits azoreductase activity. Catalyzes the reductive cleavage of the azo bond in aromatic azo compounds to the corresponding amines. In Sodalis glossinidius (strain morsitans), this protein is FMN-dependent NADH:quinone oxidoreductase.